The primary structure comprises 85 residues: Transcriptional repressor protein KorC (85 aa).

Residues 28–47 constitute a DNA-binding region (H-T-H motif); sequence EVLRLAGLTGGKAAKVLGLG.

Functionally, acts with KorA as corepressor in the control of the kilC and kilE operons. This is Transcriptional repressor protein KorC (korC) from Escherichia coli.